The sequence spans 70 residues: U-scutigerotoxin(02)-Tl1a (70 aa).

Positions 1 to 17 (MKYILLGLLLMVVLANA) are cleaved as a signal peptide.

Belongs to the scutigerotoxin-02 family. Contains 4 disulfide bonds. As to expression, expressed by the venom gland.

The protein resides in the secreted. The polypeptide is U-scutigerotoxin(02)-Tl1a (Thereuopoda longicornis (Long-legged centipede)).